A 428-amino-acid polypeptide reads, in one-letter code: U2 small nuclear ribonucleoprotein auxiliary factor 35 kDa subunit-related protein 2-like (428 aa).

Residues 1–51 (MASRQTAIPEKLSRKQYKAAMKKEKRKKRRQKMARLRALEAPPEEDDDVSA) are disordered. The span at 23–35 (KEKRKKRRQKMAR) shows a compositional bias: basic residues. Residues 42–51 (PPEEDDDVSA) are compositionally biased toward acidic residues. A Phosphoserine modification is found at serine 50. Residues 157–185 (EKYRPSCPFYNKTGACRFGNRCSRKHDFP) form a C3H1-type 1 zinc finger. Residues 189–295 (PTLLVKSMFT…RQLQCEFCPV (107 aa)) form the RRM domain. The C3H1-type 2 zinc finger occupies 297–324 (RWKVAICGLFEMQKCPKGKHCNFLHVFR). A disordered region spans residues 339–428 (MSPPAWTGSS…PGPQSQSHRT (90 aa)). Serine 340 carries the post-translational modification Phosphoserine. Over residues 351–366 (NSDRRERKDHHEEYYS) the composition is skewed to basic and acidic residues. Residues 367–377 (KSRSYHSGSYH) show a composition bias toward low complexity. The residue at position 375 (serine 375) is a Phosphoserine. Residues 389–410 (SPHRWKKSHKQTTKSHERHSSR) show a composition bias toward basic residues. Polar residues predominate over residues 419–428 (PGPQSQSHRT).

Interacts with SF3B1. Interacts with ZCRB1. Highest expression levels are detected in the brain, and lower expression levels in other tissues like epididymis, testis, bone marrow or muscle. In testis, expressed in both Sertoli and spermatogenic cell.

It localises to the nucleus. Functionally, plays a role in splicing of the U12-type introns. Implicated also in removal of U2 introns positioned adjacent to a U12 intron. In Mus musculus (Mouse), this protein is U2 small nuclear ribonucleoprotein auxiliary factor 35 kDa subunit-related protein 2-like.